The chain runs to 202 residues: Ras-related protein RABD2b (202 aa).

Residues 15–23, 33–40, 63–67, 121–124, and 151–153 contribute to the GTP site; these read GDSGVGKSC, YLDSYIST, DTAGQ, NKND, and SAK. An Effector region motif is present at residues 37–45; sequence YISTIGVDF. Residues 174–202 are disordered; the sequence is ASQPAGGAKPPTVQIRGQPVNQQSGCCSS. Over residues 192–202 the composition is skewed to polar residues; that stretch reads PVNQQSGCCSS. 2 S-geranylgeranyl cysteine lipidation sites follow: cysteine 199 and cysteine 200.

This sequence belongs to the small GTPase superfamily. Rab family.

The protein resides in the golgi apparatus. Its subcellular location is the trans-Golgi network membrane. The protein localises to the golgi apparatus membrane. Functionally, protein transport. Regulator of membrane traffic from the Golgi apparatus towards the endoplasmic reticulum (ER). This is Ras-related protein RABD2b (RABD2B) from Arabidopsis thaliana (Mouse-ear cress).